The following is a 100-amino-acid chain: Small ribosomal subunit protein uS14c (100 aa).

Belongs to the universal ribosomal protein uS14 family. In terms of assembly, part of the 30S ribosomal subunit.

The protein localises to the plastid. The protein resides in the chloroplast. Functionally, binds 16S rRNA, required for the assembly of 30S particles. This is Small ribosomal subunit protein uS14c from Arabis hirsuta (Hairy rock-cress).